We begin with the raw amino-acid sequence, 1313 residues long: Target of rapamycin complex 1 subunit mip1 (1313 aa).

The tract at residues 1–35 is disordered; sequence MNDRISEVSGSSRARRSVLSYGTTETGSDRYTENS. Residues Ser-834, Ser-837, and Ser-882 each carry the phosphoserine modification. WD repeat units lie at residues 986–1029, 1033–1074, 1087–1126, 1130–1170, 1176–1216, 1219–1259, and 1268–1308; these read TFNN…NSFK, SATT…KVEL, GDRN…CYAN, RSSN…RDSL, EHSS…SLQT, TDNS…NTFR, and PKPS…IHTD.

The protein belongs to the WD repeat RAPTOR family. As to quaternary structure, the target of rapamycin complex 1 (TORC1) is composed of at least mip1, pop3/wat1, tco89, toc1 and tor2.

The protein localises to the cytoplasm. In terms of biological role, component of TORC1, which regulates multiple cellular processes to control cell growth in response to environmental signals. Tor2 is essential for growth. Nutrient limitation and environmental stress signals cause inactivation of TORC1. Active TORC1 positively controls cell growth and ribosome biogenesis by regulating ribosomal protein gene expression. TORC1 negatively controls G1 cell-cycle arrest, sexual development and amino acid uptake. Represses mating, meiosis and sporulation efficiency by interfering with the functions of the transcription factor ste11 and the meiosis-promoting RNA-binding protein mei2. In Schizosaccharomyces pombe (strain 972 / ATCC 24843) (Fission yeast), this protein is Target of rapamycin complex 1 subunit mip1.